Consider the following 459-residue polypeptide: Ribulose bisphosphate carboxylase large chain (459 aa).

The residue at position 4 (Lys-4) is an N6,N6,N6-trimethyllysine. Asn-113 and Thr-163 together coordinate substrate. Lys-165 serves as the catalytic Proton acceptor. Lys-167 provides a ligand contact to substrate. Mg(2+)-binding residues include Lys-191, Asp-193, and Glu-194. At Lys-191 the chain carries N6-carboxylysine. The Proton acceptor role is filled by His-284. The substrate site is built by Arg-285, His-317, and Ser-369.

Belongs to the RuBisCO large chain family. Type I subfamily. Heterohexadecamer of 8 large chains and 8 small chains; disulfide-linked. The disulfide link is formed within the large subunit homodimers. It depends on Mg(2+) as a cofactor. The disulfide bond which can form in the large chain dimeric partners within the hexadecamer appears to be associated with oxidative stress and protein turnover.

The protein localises to the plastid. Its subcellular location is the chloroplast. It catalyses the reaction 2 (2R)-3-phosphoglycerate + 2 H(+) = D-ribulose 1,5-bisphosphate + CO2 + H2O. The catalysed reaction is D-ribulose 1,5-bisphosphate + O2 = 2-phosphoglycolate + (2R)-3-phosphoglycerate + 2 H(+). Functionally, ruBisCO catalyzes two reactions: the carboxylation of D-ribulose 1,5-bisphosphate, the primary event in carbon dioxide fixation, as well as the oxidative fragmentation of the pentose substrate in the photorespiration process. Both reactions occur simultaneously and in competition at the same active site. This Geum quellyon (Chilean avens) protein is Ribulose bisphosphate carboxylase large chain.